The sequence spans 528 residues: Protein WHAT'S THIS FACTOR 1 homolog, chloroplastic (528 aa).

A chloroplast-targeting transit peptide spans 1-73; that stretch reads MEPKLLLSAH…KTRVVVEPVR (73 aa). The PORR domain maps to 80–408; the sequence is KELTFDSVVQ…VKEKMRALVS (329 aa). The interval 410-528 is disordered; it reads PRFPRRGGPR…FPDGTPREKW (119 aa). Positions 418-428 are enriched in basic and acidic residues; the sequence is PRKDEEGREVE. Over residues 429-491 the composition is skewed to acidic residues; it reads IDGSDADGEE…DDDDEDEEED (63 aa).

It localises to the plastid. The protein resides in the chloroplast. Functionally, RNA-binding protein involved in group II intron splicing. Binds specific group II introns and promotes their splicing. Functions in the context of a heterodimer with the ribonuclease III domain-containing protein RNC1. This Arabidopsis thaliana (Mouse-ear cress) protein is Protein WHAT'S THIS FACTOR 1 homolog, chloroplastic.